We begin with the raw amino-acid sequence, 44 residues long: Omega-plectoxin-Pt1a (44 aa).

Disulfide bonds link C3-C17, C10-C23, C16-C35, C20-C42, and C25-C33. Threonine amide is present on T44. Residue T44 is the site of O-palmitoyl threonine attachment.

The protein belongs to the neurotoxin 02 (plectoxin) family. 02 (plectoxin) subfamily. Contains 5 disulfide bonds. Post-translationally, acylation by palmitate is required for biological activity. In terms of tissue distribution, expressed by the venom gland.

It localises to the secreted. Toxin that inhibits presynaptic voltage-gated calcium channel (Cav) in Drosophila nerve terminals, most likely through specific block of the Cav2 channel (known as Dmca1A). This chain is Omega-plectoxin-Pt1a, found in Plectreurys tristis (Spider).